The primary structure comprises 451 residues: MTSLQYFSLNRPVFPATHLHRPGIRHLQVSACANVEVQAPSSVKKQGVSKEVMEAAGRVLVGTYARVPVVLSRGKGCKLYDPEGREYLDLSAGIAVNVLGHADSDWLRAVTEQAATLTHVSNVFYSIPQVELAKRLVASSFADRVFFSNSGTEANEAAIKFARKFQRFTRPDEKQPATEFVSFSNSFHGRTMGSLALTSKENYRSPFEPVMPGVTFLEYGNIEAATQLIQRRKIAAVFVEPIQGEGGVYSATKEFLYALRKACDDSGTLLVFDEVQCGLGRTGYLWAHEIYDVFPDIMTLAKPLAGGLPIGAVLVTERVASAITYGDHGTTFAGGPLVCKAALTVLDKILRPGFLASVSKKGHYFKEMLINKLGGNSHVREVRGVGLIVGIELDVSASPLVNACLNSGLLVLTAGKGNVVRIVPPLIITEQELEKAAEILLQCLPALDRHG.

Position 302 is an N6-(pyridoxal phosphate)lysine (Lys302).

Belongs to the class-III pyridoxal-phosphate-dependent aminotransferase family. Pyridoxal 5'-phosphate is required as a cofactor. As to expression, found at highest levels in nodules, confined to the infected cells.

The protein localises to the mitochondrion. The enzyme catalyses N(2)-acetyl-L-ornithine + 2-oxoglutarate = N-acetyl-L-glutamate 5-semialdehyde + L-glutamate. The protein operates within amino-acid biosynthesis; L-arginine biosynthesis; N(2)-acetyl-L-ornithine from L-glutamate: step 4/4. Functionally, involved in the biosynthesis of citrulline. This chain is Acetylornithine aminotransferase, mitochondrial (AG118), found in Alnus glutinosa (European alder).